A 273-amino-acid polypeptide reads, in one-letter code: Putative tyrosine-protein phosphatase H16_A0669 (273 aa).

The signal sequence occupies residues 1–15; sequence MIKWLQRAGCLSAHA. Cysteine 169 serves as the catalytic Phosphocysteine intermediate.

This sequence belongs to the protein-tyrosine phosphatase family.

The enzyme catalyses O-phospho-L-tyrosyl-[protein] + H2O = L-tyrosyl-[protein] + phosphate. This Cupriavidus necator (strain ATCC 17699 / DSM 428 / KCTC 22496 / NCIMB 10442 / H16 / Stanier 337) (Ralstonia eutropha) protein is Putative tyrosine-protein phosphatase H16_A0669.